Reading from the N-terminus, the 476-residue chain is Adenosylhomocysteinase (476 aa).

Residues T67, D142, and E202 each contribute to the substrate site. 203–205 (TTT) is an NAD(+) binding site. Substrate contacts are provided by K232 and D236. NAD(+) contacts are provided by residues N237, 266–271 (GYGDVG), E289, N324, 345–347 (IGH), and N390.

This sequence belongs to the adenosylhomocysteinase family. It depends on NAD(+) as a cofactor.

It localises to the cytoplasm. It carries out the reaction S-adenosyl-L-homocysteine + H2O = L-homocysteine + adenosine. It functions in the pathway amino-acid biosynthesis; L-homocysteine biosynthesis; L-homocysteine from S-adenosyl-L-homocysteine: step 1/1. In terms of biological role, may play a key role in the regulation of the intracellular concentration of adenosylhomocysteine. The protein is Adenosylhomocysteinase of Prochlorococcus marinus (strain MIT 9303).